The following is a 280-amino-acid chain: Phospholipase C D (280 aa).

The tract at residues V258–C280 is disordered.

This sequence belongs to the bacterial phospholipase C family.

It is found in the secreted. The protein localises to the cell wall. The catalysed reaction is a 1,2-diacyl-sn-glycero-3-phosphocholine + H2O = phosphocholine + a 1,2-diacyl-sn-glycerol + H(+). It catalyses the reaction 1,2-dihexadecanoyl-sn-glycero-3-phosphocholine + H2O = 1,2-dihexadecanoyl-sn-glycerol + phosphocholine + H(+). Involved in virulence. Induces cytotoxic effects on mouse macrophage cell lines, via direct or indirect enzymatic hydrolysis of cell membrane phospholipids. Hydrolyzes phosphatidylcholine. Does not have hemolytic activity. The protein is Phospholipase C D of Mycobacterium tuberculosis (strain ATCC 25618 / H37Rv).